Consider the following 134-residue polypeptide: Small ribosomal subunit protein uS8c (134 aa).

The protein belongs to the universal ribosomal protein uS8 family. Part of the 30S ribosomal subunit.

It localises to the plastid. The protein localises to the chloroplast. One of the primary rRNA binding proteins, it binds directly to 16S rRNA central domain where it helps coordinate assembly of the platform of the 30S subunit. This chain is Small ribosomal subunit protein uS8c (rps8), found in Nicotiana tomentosiformis (Tobacco).